Consider the following 207-residue polypeptide: Small ribosomal subunit protein uS4 (207 aa).

The interval 31–52 (KAKFDSKPGQHGRTSGARTSDY) is disordered. The S4 RNA-binding domain maps to 97–157 (CRLDNVVYRM…DKSKKQARIV (61 aa)).

The protein belongs to the universal ribosomal protein uS4 family. As to quaternary structure, part of the 30S ribosomal subunit. Contacts protein S5. The interaction surface between S4 and S5 is involved in control of translational fidelity.

Functionally, one of the primary rRNA binding proteins, it binds directly to 16S rRNA where it nucleates assembly of the body of the 30S subunit. In terms of biological role, with S5 and S12 plays an important role in translational accuracy. This chain is Small ribosomal subunit protein uS4, found in Acidovorax sp. (strain JS42).